A 145-amino-acid chain; its full sequence is Large ribosomal subunit protein uL16 (145 aa).

Belongs to the universal ribosomal protein uL16 family. Part of the 50S ribosomal subunit.

Its function is as follows. Binds 23S rRNA and is also seen to make contacts with the A and possibly P site tRNAs. The protein is Large ribosomal subunit protein uL16 of Exiguobacterium sibiricum (strain DSM 17290 / CCUG 55495 / CIP 109462 / JCM 13490 / 255-15).